Reading from the N-terminus, the 308-residue chain is Pantothenate kinase (308 aa).

90–97 (GSVAVGKS) is a binding site for ATP.

The protein belongs to the prokaryotic pantothenate kinase family.

It localises to the cytoplasm. It catalyses the reaction (R)-pantothenate + ATP = (R)-4'-phosphopantothenate + ADP + H(+). Its pathway is cofactor biosynthesis; coenzyme A biosynthesis; CoA from (R)-pantothenate: step 1/5. This Sorangium cellulosum (strain So ce56) (Polyangium cellulosum (strain So ce56)) protein is Pantothenate kinase.